Here is a 339-residue protein sequence, read N- to C-terminus: Ferrochelatase (339 aa).

Fe cation-binding residues include H202 and E283.

The protein belongs to the ferrochelatase family.

It localises to the cytoplasm. It carries out the reaction heme b + 2 H(+) = protoporphyrin IX + Fe(2+). It functions in the pathway porphyrin-containing compound metabolism; protoheme biosynthesis; protoheme from protoporphyrin-IX: step 1/1. Catalyzes the ferrous insertion into protoporphyrin IX. The chain is Ferrochelatase from Psychrobacter arcticus (strain DSM 17307 / VKM B-2377 / 273-4).